Here is a 657-residue protein sequence, read N- to C-terminus: Leishmanolysin (657 aa).

Residues 1–41 form the signal peptide; the sequence is MSVDSSSSSTHRRRCVAARLVRLAAAGAAVTVAVGTAAAWA. Residues 42–102 constitute a propeptide, activation peptide; that stretch reads HAGALQHRCI…DPRPGSAPTV (61 aa). The Extracellular segment spans residues 44–611; it reads GALQHRCIHD…DRMVGLATAA (568 aa). N-linked (GlcNAc...) asparagine glycosylation is present at Asn-107. 2 disulfide bridges follow: Cys-127/Cys-144 and Cys-193/Cys-232. Residue His-266 participates in Zn(2+) binding. Glu-267 is an active-site residue. His-270 provides a ligand contact to Zn(2+). N-linked (GlcNAc...) asparagine glycosylation occurs at Asn-302. 7 cysteine pairs are disulfide-bonded: Cys-316–Cys-388, Cys-395–Cys-458, Cys-408–Cys-427, Cys-417–Cys-492, Cys-469–Cys-513, Cys-518–Cys-568, and Cys-538–Cys-561. Residue His-336 coordinates Zn(2+). 5 N-linked (GlcNAc...) asparagine glycosylation sites follow: Asn-399, Asn-409, Asn-445, Asn-466, and Asn-501. The chain crosses the membrane as a helical span at residues 612–632; that stretch reads TVLLGMVLSLMALVVVWLLLV. Topologically, residues 633–657 are cytoplasmic; sequence SCPWWCCKLGGPPASVTPACSPETE.

This sequence belongs to the peptidase M8 family. Zn(2+) is required as a cofactor.

The protein localises to the membrane. It carries out the reaction Preference for hydrophobic residues at P1 and P1' and basic residues at P2' and P3'. A model nonapeptide is cleaved at -Ala-Tyr-|-Leu-Lys-Lys-.. In terms of biological role, has an integral role during the infection of macrophages in the mammalian host. The polypeptide is Leishmanolysin (mspC) (Leishmania tropica).